The following is a 442-amino-acid chain: tRNA pseudouridine(38/39) synthase (442 aa).

Residue D151 is the Nucleophile of the active site. Y222 is a binding site for substrate.

This sequence belongs to the tRNA pseudouridine synthase TruA family.

It is found in the nucleus. It carries out the reaction uridine(38/39) in tRNA = pseudouridine(38/39) in tRNA. Its function is as follows. Formation of pseudouridines at positions 38 and 39 in the anticodon stem and loop of transfer RNAs. The chain is tRNA pseudouridine(38/39) synthase (DEG1) from Saccharomyces cerevisiae (strain ATCC 204508 / S288c) (Baker's yeast).